The sequence spans 267 residues: Cilia- and flagella-associated protein 300 (267 aa).

It belongs to the CFAP300 family. In terms of assembly, interacts with DNAAF2.

Its subcellular location is the cytoplasm. The protein localises to the cytoskeleton. It is found in the cilium axoneme. Its function is as follows. Cilium- and flagellum-specific protein that plays a role in axonemal structure organization and motility. May play a role in outer and inner dynein arm assembly. This chain is Cilia- and flagella-associated protein 300, found in Bos taurus (Bovine).